The primary structure comprises 406 residues: Mitochondrial ribosome-associated GTPase 2 (406 aa).

Positions 15-406 (FEGVGHWALS…LGQGRQPLRW (392 aa)) are localized in the mitochondria. A not localized in the mitochondria region spans residues 30–406 (KPSRLLPQQA…LGQGRQPLRW (377 aa)). The Obg domain occupies 70 to 224 (RYFVDYRRVL…RVLHLELKTV (155 aa)). The 166-residue stretch at 225-390 (AHAGMVGFPN…LLLHLKVLYD (166 aa)) folds into the OBG-type G domain. GTP contacts are provided by residues 231–238 (GFPNAGKS), 256–260 (FTTLK), 278–281 (DIPG), 345–348 (NKID), and 371–373 (SAL). The Mg(2+) site is built by Ser-238 and Thr-258.

It belongs to the TRAFAC class OBG-HflX-like GTPase superfamily. OBG GTPase family. As to quaternary structure, associates with the mitochondrial ribosome large subunit; the association occurs in a GTP-dependent manner. It depends on Mg(2+) as a cofactor.

Its subcellular location is the mitochondrion. It is found in the mitochondrion inner membrane. Its function is as follows. Plays a role in the regulation of the mitochondrial ribosome assembly and of translational activity. Displays GTPase activity. Involved in the ribosome maturation process. The polypeptide is Mitochondrial ribosome-associated GTPase 2 (MTG2) (Pongo abelii (Sumatran orangutan)).